The following is a 2230-amino-acid chain: Probable serine/threonine-protein kinase DDB_G0267686 (2230 aa).

A compositionally biased stretch (low complexity) spans 1 to 12 (MEPNNNISNSNN). Disordered regions lie at residues 1–22 (MEPNNNISNSNNGGSGIDGDGK), 121–152 (NNNSNNNNNDNNNNNNNNNNNNNNNNNIQLNN), 270–352 (DEKE…DKIS), 368–397 (PIINATDSSSNSINSSSNNSIATTPGRLSS), 430–451 (NGASGSNSGNVSPSGPTPILST), 464–574 (KNSS…NSPS), 593–620 (GSGSSSLGKGSSKKIKDSYSNNNNNSST), 699–849 (QHQQ…LLPS), and 915–974 (SNQI…SSNS). A compositionally biased stretch (basic and acidic residues) spans 270–336 (DEKENKEGGQ…NENEKNHNDK (67 aa)). Residues 337–346 (NDDDDDDEDN) show a composition bias toward acidic residues. 6 stretches are compositionally biased toward low complexity: residues 375–388 (SSSNSINSSSNNSI), 430–447 (NGASGSNSGNVSPSGPTP), 473–574 (NNNN…NSPS), 593–602 (GSGSSSLGKG), 610–619 (SYSNNNNNSS), and 699–721 (QHQQHQQAHQHQHQQQQQHQQQL). Over residues 722-731 (KSRSNTTNTP) the composition is skewed to polar residues. Residues 745–754 (NSPPVSPPSS) show a composition bias toward pro residues. Low complexity-rich tracts occupy residues 755–766 (PMLSPLSSSPPS) and 783–818 (TGSLLSGSSSNNNTTTTTTTTTSNSNSLSNNNRSNS). Positions 840-849 (YNTTPPLLPS) are enriched in polar residues. The RGS domain occupies 991–1119 (SLSALMKDRI…CILHSTTNGT (129 aa)). Disordered regions lie at residues 1146–1181 (SKETSNSLVNNNTTPNTSTASPSITASSSSTSINNN), 1220–1243 (KLSHSNSPSPSSSPPDSYTSNQPL), 1300–1362 (LSPP…GDQT), 1506–1546 (QQQQ…QPQQ), 1563–1611 (PTIP…NNNS), 1725–1771 (VSNN…NNGN), 1802–1848 (NNLM…NNNH), and 1905–1929 (ENNTTTTTTTTSNRPFRSNNPTISQ). Composition is skewed to low complexity over residues 1149 to 1181 (TSNSLVNNNTTPNTSTASPSITASSSSTSINNN) and 1222 to 1239 (SHSNSPSPSSSPPDSYTS). Residues 1324-1353 (TNGSMKSSLFQQQLQPTGSINSSPINNHQV) show a composition bias toward polar residues. Composition is skewed to low complexity over residues 1506-1520 (QQQQQQHQQHQQFQP) and 1530-1546 (PSSNSIIQPSQQQQPQQ). Residues 1726–1769 (SNNNNINSNNNNNNNNNNNNNNNNNNNNNNNNNNNNNNNSNNNN) are compositionally biased toward low complexity. Residues 1905-1915 (ENNTTTTTTTT) show a composition bias toward low complexity. The segment covering 1916-1929 (SNRPFRSNNPTISQ) has biased composition (polar residues). The Protein kinase domain occupies 1949–2208 (IVFLNKLGEG…SCPEILDSLL (260 aa)). ATP contacts are provided by residues 1955–1963 (LGEGTSAKV) and Lys1976. Asp2069 (proton acceptor) is an active-site residue.

It belongs to the protein kinase superfamily. TKL Ser/Thr protein kinase family.

The catalysed reaction is L-seryl-[protein] + ATP = O-phospho-L-seryl-[protein] + ADP + H(+). It catalyses the reaction L-threonyl-[protein] + ATP = O-phospho-L-threonyl-[protein] + ADP + H(+). This is Probable serine/threonine-protein kinase DDB_G0267686 from Dictyostelium discoideum (Social amoeba).